The sequence spans 288 residues: Executioner caspase (288 aa).

The active site involves Cys131.

This sequence belongs to the peptidase C14A family.

In terms of biological role, may induce host cell apoptosis and contribute of the establishment of a special cell cleavage process in which apoppotic bodies are rescued by the virus and differentiate to form large vesicles in which virion assembles. The polypeptide is Executioner caspase (Spodoptera frugiperda ascovirus 1a (SfAV-1a)).